A 279-amino-acid polypeptide reads, in one-letter code: Undecaprenyl-diphosphatase (279 aa).

Transmembrane regions (helical) follow at residues 10–30 (FICF…FLPI), 48–68 (LGVS…IYYF), 96–116 (LFIY…LIKL), 128–148 (GLFS…LSEI), 203–223 (SFLV…FSLF), 229–249 (IDII…IFAI), and 259–279 (NNTL…LTTL).

It belongs to the UppP family.

It localises to the cell inner membrane. The catalysed reaction is di-trans,octa-cis-undecaprenyl diphosphate + H2O = di-trans,octa-cis-undecaprenyl phosphate + phosphate + H(+). In terms of biological role, catalyzes the dephosphorylation of undecaprenyl diphosphate (UPP). Confers resistance to bacitracin. The sequence is that of Undecaprenyl-diphosphatase from Prochlorococcus marinus (strain NATL1A).